Reading from the N-terminus, the 190-residue chain is Glutathione peroxidase 2 (190 aa).

Selenocysteine 40 is an active-site residue. Position 40 (selenocysteine 40) is a non-standard amino acid, selenocysteine.

Belongs to the glutathione peroxidase family. Homotetramer.

It is found in the cytoplasm. The protein localises to the cytosol. It carries out the reaction 2 glutathione + H2O2 = glutathione disulfide + 2 H2O. The catalysed reaction is a hydroperoxy polyunsaturated fatty acid + 2 glutathione = a hydroxy polyunsaturated fatty acid + glutathione disulfide + H2O. The enzyme catalyses tert-butyl hydroperoxide + 2 glutathione = tert-butanol + glutathione disulfide + H2O. It catalyses the reaction cumene hydroperoxide + 2 glutathione = 2-phenylpropan-2-ol + glutathione disulfide + H2O. It carries out the reaction (13S)-hydroperoxy-(9Z,11E)-octadecadienoate + 2 glutathione = (13S)-hydroxy-(9Z,11E)-octadecadienoate + glutathione disulfide + H2O. The catalysed reaction is (5S)-hydroperoxy-(6E,8Z,11Z,14Z)-eicosatetraenoate + 2 glutathione = (5S)-hydroxy-(6E,8Z,11Z,14Z)-eicosatetraenoate + glutathione disulfide + H2O. The enzyme catalyses (12R)-hydroperoxy-(5Z,8Z,10E,14Z)-eicosatetraenoate + 2 glutathione = (12R)-hydroxy-(5Z,8Z,10E,14Z)-eicosatetraenoate + glutathione disulfide + H2O. It catalyses the reaction (15S)-hydroperoxy-(5Z,8Z,11Z,13E)-eicosatetraenoate + 2 glutathione = (15S)-hydroxy-(5Z,8Z,11Z,13E)-eicosatetraenoate + glutathione disulfide + H2O. Its function is as follows. Catalyzes the reduction of hydroperoxides in a glutathione-dependent manner thus regulating cellular redox homeostasis. Can reduce small soluble hydroperoxides such as H2O2, cumene hydroperoxide and tert-butyl hydroperoxide, as well as several fatty acid-derived hydroperoxides. Cannot reduce phosphatidycholine hydroperoxide. In Mus musculus (Mouse), this protein is Glutathione peroxidase 2 (Gpx2).